Consider the following 246-residue polypeptide: Probable S-methyl-5'-thioinosine phosphorylase (246 aa).

Phosphate contacts are provided by residues Thr10 and 52 to 53 (RH). Substrate is bound at residue Met185. Thr186 is a phosphate binding site. 209 to 211 (NPA) provides a ligand contact to substrate.

The protein belongs to the PNP/MTAP phosphorylase family. MTAP subfamily. As to quaternary structure, homotrimer.

The enzyme catalyses S-methyl-5'-thioinosine + phosphate = 5-(methylsulfanyl)-alpha-D-ribose 1-phosphate + hypoxanthine. It functions in the pathway purine metabolism; purine nucleoside salvage. Functionally, catalyzes the reversible phosphorylation of S-methyl-5'-thioinosine (MTI) to hypoxanthine and 5-methylthioribose-1-phosphate. Involved in the breakdown of S-methyl-5'-thioadenosine (MTA), a major by-product of polyamine biosynthesis. Catabolism of (MTA) occurs via deamination to MTI and phosphorolysis to hypoxanthine. This chain is Probable S-methyl-5'-thioinosine phosphorylase, found in Pseudomonas syringae pv. tomato (strain ATCC BAA-871 / DC3000).